The following is a 325-amino-acid chain: Pyruvate dehydrogenase E1 component subunit beta (325 aa).

Glu60 lines the thiamine diphosphate pocket.

As to quaternary structure, heterodimer of an alpha and a beta chain. It depends on thiamine diphosphate as a cofactor.

The catalysed reaction is N(6)-[(R)-lipoyl]-L-lysyl-[protein] + pyruvate + H(+) = N(6)-[(R)-S(8)-acetyldihydrolipoyl]-L-lysyl-[protein] + CO2. The pyruvate dehydrogenase complex catalyzes the overall conversion of pyruvate to acetyl-CoA and CO(2). It contains multiple copies of three enzymatic components: pyruvate dehydrogenase (E1), dihydrolipoamide acetyltransferase (E2) and lipoamide dehydrogenase (E3). This is Pyruvate dehydrogenase E1 component subunit beta (pdhB) from Staphylococcus aureus (strain COL).